The sequence spans 447 residues: UMP-CMP kinase 2, mitochondrial (447 aa).

The N-terminal 73 residues, 1–73 (MALISRPRAP…ELLGPPGRSY (73 aa)), are a transit peptide targeting the mitochondrion. 259 to 266 (GLDATGKT) lines the ATP pocket. Residues 380–412 (EERVRRLQGRGQEKTKEEAELEANNVFRQKVEM) adopt a coiled-coil conformation.

Belongs to the thymidylate kinase family. Strongly expressed in the brain.

The protein localises to the mitochondrion. It carries out the reaction CMP + ATP = CDP + ADP. The catalysed reaction is dCMP + ATP = dCDP + ADP. The enzyme catalyses a 2'-deoxyribonucleoside 5'-diphosphate + ATP = a 2'-deoxyribonucleoside 5'-triphosphate + ADP. It catalyses the reaction a ribonucleoside 5'-diphosphate + ATP = a ribonucleoside 5'-triphosphate + ADP. Its function is as follows. Mitochondrial nucleotide monophosphate kinase needed for salvage dNTP synthesis that mediates immunomodulatory and antiviral activities through IFN-dependent and IFN-independent pathways. Restricts the replication of multiple viruses including flaviviruses or coronaviruses. Together with viperin/RSAD2 and ddhCTP, suppresses the replication of several coronaviruses through inhibition of the viral RNA-dependent RNA polymerase activities. Concerning flaviviruses, restricts RNA translation when localized to the mitochondria independently of its kinase activity. Is able to phosphorylate dUMP, dCMP, CMP, UMP and monophosphates of the pyrimidine nucleoside analogs ddC, dFdC, araC, BVDU and FdUrd with ATP as phosphate donor. Efficacy is highest for dUMP followed by dCMP while CMP and UMP are poor substrates. Controls therefore mitochondrial DNA synthesis by supplying required deoxyribonucleotides. CMPK2-dependent mitochondrial DNA synthesis is necessary for the production of oxidized mitochondrial DNA fragments after exposure to NLRP3 activators. In turn, cytosolic oxidized mtDNA associates with the NLRP3 inflammasome complex and is required for its activation. The chain is UMP-CMP kinase 2, mitochondrial (Cmpk2) from Mus musculus (Mouse).